The primary structure comprises 133 residues: Small ribosomal subunit protein uS11 (133 aa).

Belongs to the universal ribosomal protein uS11 family. Part of the 30S ribosomal subunit. Interacts with proteins S7 and S18. Binds to IF-3.

Functionally, located on the platform of the 30S subunit, it bridges several disparate RNA helices of the 16S rRNA. Forms part of the Shine-Dalgarno cleft in the 70S ribosome. This is Small ribosomal subunit protein uS11 from Shouchella clausii (strain KSM-K16) (Alkalihalobacillus clausii).